Consider the following 98-residue polypeptide: uncharacterized protein (98 aa).

2 consecutive transmembrane segments (helical) span residues 13–33 and 65–85; these read LFSLAINEPSPTFALTIIAIF and IMVIISYLKYVNLPCSFIFIS.

It localises to the membrane. This is an uncharacterized protein from Saccharomyces cerevisiae (strain ATCC 204508 / S288c) (Baker's yeast).